Here is a 321-residue protein sequence, read N- to C-terminus: 5,10-methylenetetrahydromethanopterin reductase (321 aa).

This sequence belongs to the mer family. As to quaternary structure, homotetramer.

It localises to the cytoplasm. The catalysed reaction is 5-methyl-5,6,7,8-tetrahydromethanopterin + oxidized coenzyme F420-(gamma-L-Glu)(n) + H(+) = 5,10-methylenetetrahydromethanopterin + reduced coenzyme F420-(gamma-L-Glu)(n). Its pathway is one-carbon metabolism; methanogenesis from CO(2); methyl-coenzyme M from 5,10-methylene-5,6,7,8-tetrahydromethanopterin: step 1/2. Functionally, catalyzes the reversible reduction of methylene-H(4)MPT to methyl-H(4)MPT. The protein is 5,10-methylenetetrahydromethanopterin reductase of Methanothermobacter marburgensis (strain ATCC BAA-927 / DSM 2133 / JCM 14651 / NBRC 100331 / OCM 82 / Marburg) (Methanobacterium thermoautotrophicum).